The following is a 100-amino-acid chain: Large ribosomal subunit protein uL23 (100 aa).

This sequence belongs to the universal ribosomal protein uL23 family. In terms of assembly, part of the 50S ribosomal subunit. Contacts protein L29, and trigger factor when it is bound to the ribosome.

Functionally, one of the early assembly proteins it binds 23S rRNA. One of the proteins that surrounds the polypeptide exit tunnel on the outside of the ribosome. Forms the main docking site for trigger factor binding to the ribosome. In Shewanella amazonensis (strain ATCC BAA-1098 / SB2B), this protein is Large ribosomal subunit protein uL23.